A 209-amino-acid polypeptide reads, in one-letter code: Orotate phosphoribosyltransferase (209 aa).

Residues arginine 96, lysine 100, histidine 102, and 122-130 (EDLISTGGS) each bind 5-phospho-alpha-D-ribose 1-diphosphate. Serine 126 provides a ligand contact to orotate.

It belongs to the purine/pyrimidine phosphoribosyltransferase family. PyrE subfamily. In terms of assembly, homodimer. Mg(2+) is required as a cofactor.

It catalyses the reaction orotidine 5'-phosphate + diphosphate = orotate + 5-phospho-alpha-D-ribose 1-diphosphate. It functions in the pathway pyrimidine metabolism; UMP biosynthesis via de novo pathway; UMP from orotate: step 1/2. Functionally, catalyzes the transfer of a ribosyl phosphate group from 5-phosphoribose 1-diphosphate to orotate, leading to the formation of orotidine monophosphate (OMP). The polypeptide is Orotate phosphoribosyltransferase (Streptococcus pyogenes serotype M1).